The primary structure comprises 735 residues: Transcription factor RFX4 (735 aa).

Positions 27-59 are disordered; that stretch reads NKRYSSHTSLGNVSNDENEEKENNRASKPHSTP. A compositionally biased stretch (polar residues) spans 32 to 41; that stretch reads SHTSLGNVSN. Residues 44–126 mediate DNA binding; the sequence is NEEKENNRAS…RRLGTRGQSK (83 aa). A DNA-binding region (RFX-type winged-helix) is located at residues 61–136; sequence TLQWLEENYE…YHYYGIAVKE (76 aa). A necessary for dimerization region spans residues 315-487; it reads RFSQILRRQT…NELMRAMKGE (173 aa). Residues 501–538 are disordered; it reads EATPPTPSPGPSFSPAKSATSVEVPPPSSPVSNPSPEY.

This sequence belongs to the RFX family. In terms of assembly, homodimer. Heterodimer with RFX2 and RFX3. Binds DNA. Interacts with GPS2. In terms of tissue distribution, isoform 1: Brain-specific. Isoform 2: Testis-specific. Isoform 1: Highly expressed in the suprachiasmatic nucleus, the central pacemaker site of the circadian clock (at protein level).

It is found in the nucleus. Functionally, transcription factor that plays a role in early brain development. May activate transcription by interacting directly with the X-box. May activate transcription from CX3CL1 promoter through the X-box during brain development. May be required for neural tube ciliogenesis during embryogenesis. The sequence is that of Transcription factor RFX4 (Rfx4) from Mus musculus (Mouse).